We begin with the raw amino-acid sequence, 572 residues long: Proline--tRNA ligase (572 aa).

This sequence belongs to the class-II aminoacyl-tRNA synthetase family. ProS type 1 subfamily. Homodimer.

It is found in the cytoplasm. It catalyses the reaction tRNA(Pro) + L-proline + ATP = L-prolyl-tRNA(Pro) + AMP + diphosphate. Its function is as follows. Catalyzes the attachment of proline to tRNA(Pro) in a two-step reaction: proline is first activated by ATP to form Pro-AMP and then transferred to the acceptor end of tRNA(Pro). As ProRS can inadvertently accommodate and process non-cognate amino acids such as alanine and cysteine, to avoid such errors it has two additional distinct editing activities against alanine. One activity is designated as 'pretransfer' editing and involves the tRNA(Pro)-independent hydrolysis of activated Ala-AMP. The other activity is designated 'posttransfer' editing and involves deacylation of mischarged Ala-tRNA(Pro). The misacylated Cys-tRNA(Pro) is not edited by ProRS. This chain is Proline--tRNA ligase, found in Caldicellulosiruptor saccharolyticus (strain ATCC 43494 / DSM 8903 / Tp8T 6331).